The sequence spans 754 residues: 5-methyltetrahydropteroyltriglutamate--homocysteine methyltransferase (754 aa).

Residues 17–20 (RELK) and Lys117 each bind 5-methyltetrahydropteroyltri-L-glutamate. Residues 431–433 (IGS) and Glu484 each bind L-homocysteine. Residues 431 to 433 (IGS) and Glu484 each bind L-methionine. 5-methyltetrahydropteroyltri-L-glutamate contacts are provided by residues 515–516 (RC) and Trp561. Asp599 serves as a coordination point for L-homocysteine. Asp599 contacts L-methionine. Glu605 lines the 5-methyltetrahydropteroyltri-L-glutamate pocket. His641, Cys643, and Glu665 together coordinate Zn(2+). Catalysis depends on His694, which acts as the Proton donor. Cys726 provides a ligand contact to Zn(2+).

This sequence belongs to the vitamin-B12 independent methionine synthase family. Requires Zn(2+) as cofactor.

The catalysed reaction is 5-methyltetrahydropteroyltri-L-glutamate + L-homocysteine = tetrahydropteroyltri-L-glutamate + L-methionine. It functions in the pathway amino-acid biosynthesis; L-methionine biosynthesis via de novo pathway; L-methionine from L-homocysteine (MetE route): step 1/1. Functionally, catalyzes the transfer of a methyl group from 5-methyltetrahydrofolate to homocysteine resulting in methionine formation. In Salmonella typhimurium (strain LT2 / SGSC1412 / ATCC 700720), this protein is 5-methyltetrahydropteroyltriglutamate--homocysteine methyltransferase.